A 162-amino-acid polypeptide reads, in one-letter code: CASP-like protein 1C2 (162 aa).

Over 1–6 the chain is Cytoplasmic; sequence MMKPKR. The chain crosses the membrane as a helical span at residues 7 to 27; sequence LLSLLLRLIAVGATLAAVIIM. At 28–49 the chain is on the extracellular side; it reads ATSHEKGTFFAVSYEAKYTDTP. Residues 50-70 traverse the membrane as a helical segment; the sequence is AFKYFVIANAIVTVYGFLVLF. The Cytoplasmic segment spans residues 71 to 79; sequence HPPGSPLWR. A helical transmembrane segment spans residues 80–100; that stretch reads LVLALDLVFTMLLISSISAAL. The Extracellular portion of the chain corresponds to 101 to 130; sequence AVAQVGKNGNSRAGWLPVCGQVTKYCNQVT. A helical transmembrane segment spans residues 131 to 151; the sequence is GALVAGLIALITYIILLLHSI. Residues 152 to 162 lie on the Cytoplasmic side of the membrane; that stretch reads YTFLNPLLEKA.

This sequence belongs to the Casparian strip membrane proteins (CASP) family. As to quaternary structure, homodimer and heterodimers.

It localises to the cell membrane. The chain is CASP-like protein 1C2 from Populus trichocarpa (Western balsam poplar).